The following is a 375-amino-acid chain: Succinyl-diaminopimelate desuccinylase (375 aa).

Zn(2+) is bound at residue His66. The active site involves Asp68. Asp99 contributes to the Zn(2+) binding site. Glu133 functions as the Proton acceptor in the catalytic mechanism. The Zn(2+) site is built by Glu134, Glu162, and His348.

The protein belongs to the peptidase M20A family. DapE subfamily. As to quaternary structure, homodimer. Zn(2+) is required as a cofactor. Requires Co(2+) as cofactor.

It carries out the reaction N-succinyl-(2S,6S)-2,6-diaminopimelate + H2O = (2S,6S)-2,6-diaminopimelate + succinate. It participates in amino-acid biosynthesis; L-lysine biosynthesis via DAP pathway; LL-2,6-diaminopimelate from (S)-tetrahydrodipicolinate (succinylase route): step 3/3. Catalyzes the hydrolysis of N-succinyl-L,L-diaminopimelic acid (SDAP), forming succinate and LL-2,6-diaminopimelate (DAP), an intermediate involved in the bacterial biosynthesis of lysine and meso-diaminopimelic acid, an essential component of bacterial cell walls. The chain is Succinyl-diaminopimelate desuccinylase from Salmonella dublin (strain CT_02021853).